Here is a 917-residue protein sequence, read N- to C-terminus: Protein translocase subunit SecA (917 aa).

Residues glutamine 87, 105–109 (GEGKT), and aspartate 516 each bind ATP. Zn(2+) is bound by residues cysteine 901, cysteine 903, cysteine 912, and histidine 913.

It belongs to the SecA family. As to quaternary structure, monomer and homodimer. Part of the essential Sec protein translocation apparatus which comprises SecA, SecYEG and auxiliary proteins SecDF-YajC and YidC. Zn(2+) is required as a cofactor.

The protein resides in the cell inner membrane. The protein localises to the cytoplasm. The enzyme catalyses ATP + H2O + cellular proteinSide 1 = ADP + phosphate + cellular proteinSide 2.. In terms of biological role, part of the Sec protein translocase complex. Interacts with the SecYEG preprotein conducting channel. Has a central role in coupling the hydrolysis of ATP to the transfer of proteins into and across the cell membrane, serving both as a receptor for the preprotein-SecB complex and as an ATP-driven molecular motor driving the stepwise translocation of polypeptide chains across the membrane. The chain is Protein translocase subunit SecA from Acidovorax sp. (strain JS42).